A 375-amino-acid polypeptide reads, in one-letter code: Queuine tRNA-ribosyltransferase (375 aa).

The active-site Proton acceptor is the aspartate 89. Substrate contacts are provided by residues 89 to 93, aspartate 143, glutamine 187, and glycine 214; that span reads DSGGF. The interval 245–251 is RNA binding; it reads GVGKPED. The active-site Nucleophile is aspartate 264. Positions 269-273 are RNA binding; important for wobble base 34 recognition; sequence TRNAR. 4 residues coordinate Zn(2+): cysteine 302, cysteine 304, cysteine 307, and histidine 333.

This sequence belongs to the queuine tRNA-ribosyltransferase family. As to quaternary structure, homodimer. Within each dimer, one monomer is responsible for RNA recognition and catalysis, while the other monomer binds to the replacement base PreQ1. The cofactor is Zn(2+).

The catalysed reaction is 7-aminomethyl-7-carbaguanine + guanosine(34) in tRNA = 7-aminomethyl-7-carbaguanosine(34) in tRNA + guanine. It functions in the pathway tRNA modification; tRNA-queuosine biosynthesis. Catalyzes the base-exchange of a guanine (G) residue with the queuine precursor 7-aminomethyl-7-deazaguanine (PreQ1) at position 34 (anticodon wobble position) in tRNAs with GU(N) anticodons (tRNA-Asp, -Asn, -His and -Tyr). Catalysis occurs through a double-displacement mechanism. The nucleophile active site attacks the C1' of nucleotide 34 to detach the guanine base from the RNA, forming a covalent enzyme-RNA intermediate. The proton acceptor active site deprotonates the incoming PreQ1, allowing a nucleophilic attack on the C1' of the ribose to form the product. After dissociation, two additional enzymatic reactions on the tRNA convert PreQ1 to queuine (Q), resulting in the hypermodified nucleoside queuosine (7-(((4,5-cis-dihydroxy-2-cyclopenten-1-yl)amino)methyl)-7-deazaguanosine). The polypeptide is Queuine tRNA-ribosyltransferase (Klebsiella pneumoniae subsp. pneumoniae (strain ATCC 700721 / MGH 78578)).